A 412-amino-acid polypeptide reads, in one-letter code: Serine hydroxymethyltransferase (412 aa).

Residues leucine 117 and 121–123 contribute to the (6S)-5,6,7,8-tetrahydrofolate site; that span reads GHL. Lysine 226 is modified (N6-(pyridoxal phosphate)lysine). 349–351 lines the (6S)-5,6,7,8-tetrahydrofolate pocket; it reads SPF.

Belongs to the SHMT family. As to quaternary structure, homodimer. Pyridoxal 5'-phosphate is required as a cofactor.

The protein localises to the cytoplasm. It catalyses the reaction (6R)-5,10-methylene-5,6,7,8-tetrahydrofolate + glycine + H2O = (6S)-5,6,7,8-tetrahydrofolate + L-serine. Its pathway is one-carbon metabolism; tetrahydrofolate interconversion. The protein operates within amino-acid biosynthesis; glycine biosynthesis; glycine from L-serine: step 1/1. In terms of biological role, catalyzes the reversible interconversion of serine and glycine with tetrahydrofolate (THF) serving as the one-carbon carrier. This reaction serves as the major source of one-carbon groups required for the biosynthesis of purines, thymidylate, methionine, and other important biomolecules. Also exhibits THF-independent aldolase activity toward beta-hydroxyamino acids, producing glycine and aldehydes, via a retro-aldol mechanism. This chain is Serine hydroxymethyltransferase, found in Lawsonia intracellularis (strain PHE/MN1-00).